A 420-amino-acid chain; its full sequence is Proteasome-activating nucleotidase (420 aa).

A disordered region spans residues 1 to 25; sequence MRSHLVKPGSVYDGIEPGELGETTE. A coiled-coil region spans residues 22–79; it reads ETTESVQDRVRQLESRNSFLEEQCSQIESEKRYLENQKIKYEREIRKLQSELDRMKTS. Residues 203–208 and His-342 each bind ATP; that span reads GTGKTL. The interval 418 to 420 is docks into pockets in the proteasome alpha-ring to cause gate opening; the sequence is MFV.

It belongs to the AAA ATPase family. Homohexamer. The hexameric complex has a two-ring architecture resembling a top hat that caps the 20S proteasome core at one or both ends. Upon ATP-binding, the C-terminus of PAN interacts with the alpha-rings of the proteasome core by binding to the intersubunit pockets.

The protein localises to the cytoplasm. Its function is as follows. ATPase which is responsible for recognizing, binding, unfolding and translocation of substrate proteins into the archaeal 20S proteasome core particle. Is essential for opening the gate of the 20S proteasome via an interaction with its C-terminus, thereby allowing substrate entry and access to the site of proteolysis. Thus, the C-termini of the proteasomal ATPase function like a 'key in a lock' to induce gate opening and therefore regulate proteolysis. Unfolding activity requires energy from ATP hydrolysis, whereas ATP binding alone promotes ATPase-20S proteasome association which triggers gate opening, and supports translocation of unfolded substrates. The protein is Proteasome-activating nucleotidase of Methanosarcina mazei (strain ATCC BAA-159 / DSM 3647 / Goe1 / Go1 / JCM 11833 / OCM 88) (Methanosarcina frisia).